The following is a 214-amino-acid chain: Pyridoxine/pyridoxamine 5'-phosphate oxidase (214 aa).

Substrate contacts are provided by residues 9-12 (RKNY) and Lys67. FMN contacts are provided by residues 62–67 (RMVLLK), 77–78 (YT), Lys84, and Gln106. Residues Tyr124, Arg128, and Ser132 each contribute to the substrate site. FMN is bound by residues 141–142 (QS) and Trp186. 192–194 (RLH) serves as a coordination point for substrate. An FMN-binding site is contributed by Arg196.

The protein belongs to the pyridoxamine 5'-phosphate oxidase family. Homodimer. It depends on FMN as a cofactor.

The enzyme catalyses pyridoxamine 5'-phosphate + O2 + H2O = pyridoxal 5'-phosphate + H2O2 + NH4(+). It catalyses the reaction pyridoxine 5'-phosphate + O2 = pyridoxal 5'-phosphate + H2O2. It participates in cofactor metabolism; pyridoxal 5'-phosphate salvage; pyridoxal 5'-phosphate from pyridoxamine 5'-phosphate: step 1/1. Its pathway is cofactor metabolism; pyridoxal 5'-phosphate salvage; pyridoxal 5'-phosphate from pyridoxine 5'-phosphate: step 1/1. Functionally, catalyzes the oxidation of either pyridoxine 5'-phosphate (PNP) or pyridoxamine 5'-phosphate (PMP) into pyridoxal 5'-phosphate (PLP). The protein is Pyridoxine/pyridoxamine 5'-phosphate oxidase of Gloeothece citriformis (strain PCC 7424) (Cyanothece sp. (strain PCC 7424)).